The following is an 870-amino-acid chain: Aminopeptidase N (870 aa).

Residues Glu-121 and 261–265 (GAMEN) each bind substrate. Zn(2+) is bound at residue His-297. Glu-298 serves as the catalytic Proton acceptor. His-301 and Glu-320 together coordinate Zn(2+).

It belongs to the peptidase M1 family. Requires Zn(2+) as cofactor.

Its subcellular location is the cell inner membrane. The enzyme catalyses Release of an N-terminal amino acid, Xaa-|-Yaa- from a peptide, amide or arylamide. Xaa is preferably Ala, but may be most amino acids including Pro (slow action). When a terminal hydrophobic residue is followed by a prolyl residue, the two may be released as an intact Xaa-Pro dipeptide.. Aminopeptidase N is involved in the degradation of intracellular peptides generated by protein breakdown during normal growth as well as in response to nutrient starvation. In Escherichia coli (strain K12), this protein is Aminopeptidase N (pepN).